Here is a 180-residue protein sequence, read N- to C-terminus: uncharacterized protein (180 aa).

A signal peptide spans 1–24; it reads MKKKTIFQCVILFFSILNIHVGMA.

Functionally, part of the elfADCG-ycbUVF fimbrial operon, which promotes adhesion of bacteria to different abiotic surfaces. This is an uncharacterized protein from Escherichia coli (strain K12).